The following is a 536-amino-acid chain: Chorismate synthase (536 aa).

The active site involves histidine 17. Residues 37 to 59 (EDVQPQLNRRRPGQGPLSTQRRE) form a disordered region. Histidine 104 is a catalytic residue. Residues 344 to 377 (ERDGCSAATLSRERASDGRTTSRHEEEVERGRER) are disordered. Residues 354-377 (SRERASDGRTTSRHEEEVERGRER) show a composition bias toward basic and acidic residues. The active site involves aspartate 489.

Belongs to the chorismate synthase family. It depends on FMNH2 as a cofactor.

The enzyme catalyses 5-O-(1-carboxyvinyl)-3-phosphoshikimate = chorismate + phosphate. It carries out the reaction FMNH2 + NADP(+) = FMN + NADPH + 2 H(+). The protein operates within metabolic intermediate biosynthesis; chorismate biosynthesis; chorismate from D-erythrose 4-phosphate and phosphoenolpyruvate: step 7/7. Functionally, bifunctional chorismate synthase and flavin reductase. Catalyzes the conversion of 5-enolpyruvylshikimate 3-phosphate (EPSP) to form chorismate. Acts also as a flavin reductase (FR) able to generate reduced flavin mononucleotide in the presence of NADPH. This is Chorismate synthase (AROC) from Toxoplasma gondii.